The chain runs to 279 residues: Secreted RxLR effector protein 152 (279 aa).

The first 22 residues, 1–22, serve as a signal peptide directing secretion; it reads MRNGSVLFGLFFIGHSCSVLLA. The RxLR-dEER signature appears at 47 to 62; it reads RTLQADDSERTLAEER.

Belongs to the RxLR effector family.

Its subcellular location is the secreted. It localises to the host nucleus. In terms of biological role, secreted effector that completely suppresses the host cell death induced by cell death-inducing proteins. The chain is Secreted RxLR effector protein 152 from Plasmopara viticola (Downy mildew of grapevine).